The chain runs to 230 residues: Orotidine 5'-phosphate decarboxylase (230 aa).

Residues D8, K30, 59-68, T118, R178, Q187, G207, and R208 contribute to the substrate site; that span reads DLKLYDIPNT. K61 (proton donor) is an active-site residue.

This sequence belongs to the OMP decarboxylase family. Type 1 subfamily. In terms of assembly, homodimer.

It carries out the reaction orotidine 5'-phosphate + H(+) = UMP + CO2. It functions in the pathway pyrimidine metabolism; UMP biosynthesis via de novo pathway; UMP from orotate: step 2/2. In terms of biological role, catalyzes the decarboxylation of orotidine 5'-monophosphate (OMP) to uridine 5'-monophosphate (UMP). The protein is Orotidine 5'-phosphate decarboxylase of Sulfurovum sp. (strain NBC37-1).